Reading from the N-terminus, the 379-residue chain is Dual-specificity RNA methyltransferase RlmN (379 aa).

The Proton acceptor role is filled by E97. Residues 103-343 enclose the Radical SAM core domain; the sequence is QGGRGTLCVS…VRTTRGDDID (241 aa). C110 and C346 form a disulfide bridge. Residues C117, C121, and C124 each contribute to the [4Fe-4S] cluster site. Residues 171–172, S203, 225–227, and N303 contribute to the S-adenosyl-L-methionine site; these read GE and SLH. C346 functions as the S-methylcysteine intermediate in the catalytic mechanism.

This sequence belongs to the radical SAM superfamily. RlmN family. The cofactor is [4Fe-4S] cluster.

It is found in the cytoplasm. The enzyme catalyses adenosine(2503) in 23S rRNA + 2 reduced [2Fe-2S]-[ferredoxin] + 2 S-adenosyl-L-methionine = 2-methyladenosine(2503) in 23S rRNA + 5'-deoxyadenosine + L-methionine + 2 oxidized [2Fe-2S]-[ferredoxin] + S-adenosyl-L-homocysteine. It catalyses the reaction adenosine(37) in tRNA + 2 reduced [2Fe-2S]-[ferredoxin] + 2 S-adenosyl-L-methionine = 2-methyladenosine(37) in tRNA + 5'-deoxyadenosine + L-methionine + 2 oxidized [2Fe-2S]-[ferredoxin] + S-adenosyl-L-homocysteine. Its function is as follows. Specifically methylates position 2 of adenine 2503 in 23S rRNA and position 2 of adenine 37 in tRNAs. m2A2503 modification seems to play a crucial role in the proofreading step occurring at the peptidyl transferase center and thus would serve to optimize ribosomal fidelity. In Pseudomonas aeruginosa (strain ATCC 15692 / DSM 22644 / CIP 104116 / JCM 14847 / LMG 12228 / 1C / PRS 101 / PAO1), this protein is Dual-specificity RNA methyltransferase RlmN.